Consider the following 483-residue polypeptide: Glutamyl-tRNA(Gln) amidotransferase subunit A (483 aa).

Catalysis depends on charge relay system residues K77 and S152. S176 (acyl-ester intermediate) is an active-site residue.

This sequence belongs to the amidase family. GatA subfamily. In terms of assembly, heterotrimer of A, B and C subunits.

The enzyme catalyses L-glutamyl-tRNA(Gln) + L-glutamine + ATP + H2O = L-glutaminyl-tRNA(Gln) + L-glutamate + ADP + phosphate + H(+). Allows the formation of correctly charged Gln-tRNA(Gln) through the transamidation of misacylated Glu-tRNA(Gln) in organisms which lack glutaminyl-tRNA synthetase. The reaction takes place in the presence of glutamine and ATP through an activated gamma-phospho-Glu-tRNA(Gln). In Listeria innocua serovar 6a (strain ATCC BAA-680 / CLIP 11262), this protein is Glutamyl-tRNA(Gln) amidotransferase subunit A.